Reading from the N-terminus, the 433-residue chain is GTPase Obg (433 aa).

The Obg domain occupies 1–159; the sequence is MKFVDSADLI…FEIRAELKVL (159 aa). Residues 160–332 enclose the OBG-type G domain; that stretch reads ADVGFVGLPN…LLFMIYEELK (173 aa). GTP is bound by residues 166–173, 191–195, 213–216, 284–287, and 313–315; these read GLPNAGKS, FTTIT, DLPG, NKMD, and SGL. Mg(2+) is bound by residues Ser-173 and Thr-193. An OCT domain is found at 355 to 433; it reads KFEEQKEDIQ…VFDYELEWTD (79 aa).

The protein belongs to the TRAFAC class OBG-HflX-like GTPase superfamily. OBG GTPase family. Monomer. Mg(2+) is required as a cofactor.

The protein localises to the cytoplasm. Its function is as follows. An essential GTPase which binds GTP, GDP and possibly (p)ppGpp with moderate affinity, with high nucleotide exchange rates and a fairly low GTP hydrolysis rate. Plays a role in control of the cell cycle, stress response, ribosome biogenesis and in those bacteria that undergo differentiation, in morphogenesis control. The polypeptide is GTPase Obg (Mycoplasma mycoides subsp. mycoides SC (strain CCUG 32753 / NCTC 10114 / PG1)).